We begin with the raw amino-acid sequence, 159 residues long: 2-amino-4-hydroxy-6-hydroxymethyldihydropteridine pyrophosphokinase (159 aa).

Belongs to the HPPK family. As to quaternary structure, monomer.

It carries out the reaction 6-hydroxymethyl-7,8-dihydropterin + ATP = (7,8-dihydropterin-6-yl)methyl diphosphate + AMP + H(+). The protein operates within cofactor biosynthesis; tetrahydrofolate biosynthesis; 2-amino-4-hydroxy-6-hydroxymethyl-7,8-dihydropteridine diphosphate from 7,8-dihydroneopterin triphosphate: step 4/4. Functionally, catalyzes the transfer of pyrophosphate from adenosine triphosphate (ATP) to 6-hydroxymethyl-7,8-dihydropterin, an enzymatic step in folate biosynthesis pathway. This is 2-amino-4-hydroxy-6-hydroxymethyldihydropteridine pyrophosphokinase (folK) from Escherichia coli (strain K12).